A 20-amino-acid polypeptide reads, in one-letter code: Alpha-amylase (20 aa).

It carries out the reaction Endohydrolysis of (1-&gt;4)-alpha-D-glucosidic linkages in polysaccharides containing three or more (1-&gt;4)-alpha-linked D-glucose units.. Strongly inhibited by Hg (2+). Inhibited by Zn (2+). Activated by Fe (2+), Mg (2+) and Ba (2+). Alpha-amylase active towards amylose, starch, amylopectin and maltodextrins. Has lower activity towards glycogen, and is not active towards alpha/beta-cyclodextrin. In Bacillus sp, this protein is Alpha-amylase.